We begin with the raw amino-acid sequence, 674 residues long: Regulator of G-protein signaling 9 (674 aa).

A DEP domain is found at 30–105 (PETGVRMQNQ…PDGSLYRFQT (76 aa)). Residues 219–280 (KQTVVAVKKE…NPWITDDTQF (62 aa)) enclose the G protein gamma domain. The RGS domain maps to 298 to 413 (RWAFNFSELI…YARYLKSPIY (116 aa)). A disordered region spans residues 533–573 (SSGLEQKGECSGSMAPRGPSVTESSEASLDTSWPRSRPRAP). Over residues 553–565 (VTESSEASLDTSW) the composition is skewed to polar residues.

As to quaternary structure, heterodimer with GNB5. Interacts with RGS7BP, leading to regulate the subcellular location of the heterodimer formed with GNB5. Component of the RGS9-1-Gbeta5 complex composed of RGS9 (RGS9-1), Gbeta5 (GNB5) and RGS9BP. Interacts with PDE6G and GNAT1. Post-translationally, retinal isoform 3 is light-dependent phosphorylated at 'Ser-478'. Phosphorylation is decreased by light exposition. In terms of tissue distribution, highly expressed in the caudate and putamen, lower levels found in the hypothalamus and nucleus accumbens and very low levels in cerebellum. Not expressed in globus pallidus or cingulate cortex. Isoform 2 is expressed predominantly in pineal gland and retina. Isoform 3 is expressed in retina (abundant in photoreceptors).

The protein localises to the membrane. In terms of biological role, inhibits signal transduction by increasing the GTPase activity of G protein alpha subunits thereby driving them into their inactive GDP-bound form. Binds to GNAT1. Involved in phototransduction; key element in the recovery phase of visual transduction. The polypeptide is Regulator of G-protein signaling 9 (RGS9) (Homo sapiens (Human)).